The primary structure comprises 445 residues: UDP-N-acetylmuramoylalanine--D-glutamate ligase (445 aa).

117–123 contacts ATP; it reads GSNGKTT.

It belongs to the MurCDEF family.

It is found in the cytoplasm. It catalyses the reaction UDP-N-acetyl-alpha-D-muramoyl-L-alanine + D-glutamate + ATP = UDP-N-acetyl-alpha-D-muramoyl-L-alanyl-D-glutamate + ADP + phosphate + H(+). The protein operates within cell wall biogenesis; peptidoglycan biosynthesis. In terms of biological role, cell wall formation. Catalyzes the addition of glutamate to the nucleotide precursor UDP-N-acetylmuramoyl-L-alanine (UMA). The sequence is that of UDP-N-acetylmuramoylalanine--D-glutamate ligase from Neisseria meningitidis serogroup B (strain ATCC BAA-335 / MC58).